The chain runs to 520 residues: Keratin, type II cytoskeletal 72 (520 aa).

The head stretch occupies residues 1 to 133 (MSRQLTLYPG…DPEIQKVRAQ (133 aa)). The interval 134 to 169 (EREQIKALNNKFASFIDKVRFLEQQNQVLETKWELL) is coil 1A. Positions 134–447 (EREQIKALNN…KLLESEESRM (314 aa)) constitute an IF rod domain. The tract at residues 170 to 188 (QQLDLNNSKRSLEPVHESY) is linker 1. The coil 1B stretch occupies residues 189 to 280 (ISNLQKQLEI…VLFEGEIAQM (92 aa)). The tract at residues 281 to 304 (QSHISDTSVILSMDNNRQLDLDSI) is linker 12. Positions 305-443 (LAEVRAQYEE…ATYRKLLESE (139 aa)) are coil 2. The tail stretch occupies residues 444 to 520 (ESRMAGEYPN…SSGTTKKTSR (77 aa)). The tract at residues 494-520 (KGSCGSELKDPPAKTSGSSGTTKKTSR) is disordered. Positions 507–520 (KTSGSSGTTKKTSR) are enriched in low complexity.

It belongs to the intermediate filament family. In terms of assembly, heterotetramer of two type I and two type II keratins.

Functionally, has a role in hair formation. Specific component of keratin intermediate filaments in the inner root sheath (IRS) of the hair follicle. In Mus musculus (Mouse), this protein is Keratin, type II cytoskeletal 72 (Krt72).